Reading from the N-terminus, the 947-residue chain is Bifunctional glutamine synthetase adenylyltransferase/adenylyl-removing enzyme (947 aa).

Residues 1–440 (MTPLSSPLRQ…VFNELIGDDE (440 aa)) are adenylyl removase. Residues 450-947 (SEPWREVWQD…ASWRKWLVAV (498 aa)) are adenylyl transferase.

The protein belongs to the GlnE family. Mg(2+) is required as a cofactor.

The catalysed reaction is [glutamine synthetase]-O(4)-(5'-adenylyl)-L-tyrosine + phosphate = [glutamine synthetase]-L-tyrosine + ADP. It catalyses the reaction [glutamine synthetase]-L-tyrosine + ATP = [glutamine synthetase]-O(4)-(5'-adenylyl)-L-tyrosine + diphosphate. Involved in the regulation of glutamine synthetase GlnA, a key enzyme in the process to assimilate ammonia. When cellular nitrogen levels are high, the C-terminal adenylyl transferase (AT) inactivates GlnA by covalent transfer of an adenylyl group from ATP to specific tyrosine residue of GlnA, thus reducing its activity. Conversely, when nitrogen levels are low, the N-terminal adenylyl removase (AR) activates GlnA by removing the adenylyl group by phosphorolysis, increasing its activity. The regulatory region of GlnE binds the signal transduction protein PII (GlnB) which indicates the nitrogen status of the cell. This chain is Bifunctional glutamine synthetase adenylyltransferase/adenylyl-removing enzyme, found in Salmonella arizonae (strain ATCC BAA-731 / CDC346-86 / RSK2980).